The chain runs to 179 residues: Ribosomal-protein-serine acetyltransferase (179 aa).

Residues 11-172 (LELHAVAENH…NDAYDDVNLY (162 aa)) enclose the N-acetyltransferase domain.

The protein belongs to the acetyltransferase family. RimL subfamily.

It is found in the cytoplasm. It catalyses the reaction N-terminal L-seryl-[ribosomal protein bL12] + acetyl-CoA = N-terminal N(alpha)-acetyl-L-seryl-[ribosomal protein bL12] + CoA + H(+). Functionally, this enzyme acetylates the N-terminal serine of ribosomal protein bL12, converting it into the acetylated form of bL12 known as bL7. The protein is Ribosomal-protein-serine acetyltransferase of Escherichia coli (strain K12).